The chain runs to 569 residues: MRVSQMLVPTLREVPAEAEVVSHQLLLRAGFIRKTASGVYTYLPLAQRVLKKLRQIIREEIDKQGGQELLMPIIQPAEMWLESGRWHVYGPELFRLKDRHDRNFCLGPTHEEVITILIRGEVRSYKQMPLLLYQIQNKYRDERRPRFGLLRGREFIMKDLYSFDRDEAGLDISYQKMHEAYTSIFSRCGVKFRPVEADSGAIGGSSTHEFMVLAESGEAAILYCSDCDYAANVEKATTLPAAGLDPAIQQLELQEVSTPGKKTAEEVAKFLGVEPFQVIKTMFYKTDKEVVAALVRGDRDVNEIKLLNVLGALTLDLADESTVQQVTGAPTGYVGPVGLENIRIVADMEVMALVNAVVGANKQDAHLINVNPKRDFQPEIVEDIRMVKAGEPCPKCGAQLLEARGIEVGQIFKLGTKYSKALGATFLDENGKEQPIVMGCYGIGVSRTMAAAIEQNYDKDGIIWPASIAPYQAIVIPVAPKDDNQMKIAEELYKALNQAGVETILDDRSERPGVKFKDADLIGYPLRIVVGNKAVTEGVVEIRQRRSGQTDLVSVKDSVPKILEILPTL.

This sequence belongs to the class-II aminoacyl-tRNA synthetase family. ProS type 1 subfamily. In terms of assembly, homodimer.

It localises to the cytoplasm. It carries out the reaction tRNA(Pro) + L-proline + ATP = L-prolyl-tRNA(Pro) + AMP + diphosphate. Functionally, catalyzes the attachment of proline to tRNA(Pro) in a two-step reaction: proline is first activated by ATP to form Pro-AMP and then transferred to the acceptor end of tRNA(Pro). As ProRS can inadvertently accommodate and process non-cognate amino acids such as alanine and cysteine, to avoid such errors it has two additional distinct editing activities against alanine. One activity is designated as 'pretransfer' editing and involves the tRNA(Pro)-independent hydrolysis of activated Ala-AMP. The other activity is designated 'posttransfer' editing and involves deacylation of mischarged Ala-tRNA(Pro). The misacylated Cys-tRNA(Pro) is not edited by ProRS. The protein is Proline--tRNA ligase of Desulforamulus reducens (strain ATCC BAA-1160 / DSM 100696 / MI-1) (Desulfotomaculum reducens).